A 296-amino-acid polypeptide reads, in one-letter code: tRNA uridine(34) hydroxylase (296 aa).

The Rhodanese domain occupies 130–225 (RGEDVVFFDG…YGEAYGDRGL (96 aa)). The active-site Cysteine persulfide intermediate is the cysteine 185.

Belongs to the TrhO family.

It carries out the reaction uridine(34) in tRNA + AH2 + O2 = 5-hydroxyuridine(34) in tRNA + A + H2O. Catalyzes oxygen-dependent 5-hydroxyuridine (ho5U) modification at position 34 in tRNAs. The polypeptide is tRNA uridine(34) hydroxylase (Kocuria rhizophila (strain ATCC 9341 / DSM 348 / NBRC 103217 / DC2201)).